The sequence spans 340 residues: ATP synthase subunit a (340 aa).

An N-terminal signal peptide occupies residues 1-32 (MKRVNVIQAKAFLKVIALLVPLLLNANGPAFA). The next 6 membrane-spanning stretches (helical) occupy residues 107-127 (HVVM…LVGS), 172-192 (LLTV…PYGA), 197-217 (NINV…VAAL), 236-256 (ALWI…PVAL), 269-289 (IVIL…VAVV), and 296-316 (IFIY…FTML).

This sequence belongs to the ATPase A chain family. In terms of assembly, F-type ATPases have 2 components, CF(1) - the catalytic core - and CF(0) - the membrane proton channel. CF(1) has five subunits: alpha(3), beta(3), gamma(1), delta(1), epsilon(1). CF(0) has four main subunits: a, b, b' and c.

It localises to the cell inner membrane. Functionally, key component of the proton channel; it plays a direct role in the translocation of protons across the membrane. The chain is ATP synthase subunit a from Pelodictyon phaeoclathratiforme (strain DSM 5477 / BU-1).